A 1574-amino-acid chain; its full sequence is Sterol 3-beta-glucosyltransferase (1574 aa).

Polar residues predominate over residues 37–48 (TFLNQNPASPNN). Disordered stretches follow at residues 37 to 61 (TFLN…NKDE) and 102 to 170 (ASNA…HSKL). Composition is skewed to basic and acidic residues over residues 107–121 (EAKD…RSSR) and 128–138 (PEYRREYKLDY). The segment covering 139 to 148 (DIDESEEDDI) has biased composition (acidic residues). The span at 149–170 (ESTRDENTLKPKTEDTSVHSKL) shows a compositional bias: basic and acidic residues. Positions 253–288 (DKLKRVFELNDDDYFYGNYNVWLVRDVLLQGHIYLT) constitute a GRAM 1 domain. One can recognise a PH domain in the interval 323 to 471 (DVIQSGSLGM…WVNNIVKVVF (149 aa)). Disordered regions lie at residues 389–413 (GRND…SGDE), 538–559 (RMKK…GNEP), 651–722 (ASHR…PVQG), and 774–806 (DALS…KKKN). Positions 692 to 701 (ITPSKIFSNK) are enriched in polar residues. The segment covering 702–711 (SRTESEKSTP) has biased composition (basic and acidic residues). Residues 712–722 (DRSQTTSPVQG) show a composition bias toward polar residues. Residues 854–920 (RHFQERFSFN…IDVDTCSKEK (67 aa)) enclose the GRAM 2 domain. Positions 964 to 976 (RESGNESSDDNKS) are enriched in basic and acidic residues. Residues 964-996 (RESGNESSDDNKSAQHGKSGCFQKTPSSAETTK) are disordered. The segment covering 985–996 (FQKTPSSAETTK) has biased composition (polar residues). UDP-alpha-D-glucose is bound by residues S1057, R1058, D1060, N1333, I1364, H1366, H1379, S1382, G1383, T1384, D1403, and Q1404. The disordered stretch occupies residues 1505–1574 (DSDTYDADHD…DNTTVTDANK (70 aa)). The segment covering 1510–1533 (DADHDSDKESDHDQTYEQDNHSDY) has biased composition (basic and acidic residues). The segment covering 1563–1574 (GNDNTTVTDANK) has biased composition (polar residues).

It belongs to the glycosyltransferase 28 family.

The protein resides in the cytoplasm. The protein localises to the membrane. The catalysed reaction is a sterol + UDP-alpha-D-glucose = a sterol 3-beta-D-glucoside + UDP + H(+). The enzyme catalyses ergosterol + UDP-alpha-D-glucose = ergosteryl 3-beta-D-glucoside + UDP + H(+). Its function is as follows. Sterol glycosyltransferase responsible for the glycosylation of ergosterol to form ergosterol-glucoside. In Debaryomyces hansenii (strain ATCC 36239 / CBS 767 / BCRC 21394 / JCM 1990 / NBRC 0083 / IGC 2968) (Yeast), this protein is Sterol 3-beta-glucosyltransferase.